The chain runs to 159 residues: Deoxyuridine 5'-triphosphate nucleotidohydrolase (159 aa).

The dUMP site is built by S79, G92, D95, Y98, K103, R148, F153, and G154.

The protein belongs to the dUTPase family. As to quaternary structure, homotrimer. Mg(2+) serves as cofactor.

The enzyme catalyses dUTP + H2O = dUMP + diphosphate + H(+). It participates in pyrimidine metabolism; dUMP biosynthesis; dUMP from dCTP (dUTP route): step 2/2. In terms of biological role, involved in nucleotide metabolism via production of dUMP, the immediate precursor of thymidine nucleotides, and decreases the intracellular concentration of dUTP so that uracil cannot be incorporated into DNA. The protein is Deoxyuridine 5'-triphosphate nucleotidohydrolase (DUT1) of Candida albicans (strain SC5314 / ATCC MYA-2876) (Yeast).